We begin with the raw amino-acid sequence, 390 residues long: MLIKLNDYEKNITQKIKDLKNASGSHSPSIFTMAEQIPELNIKIDSCFLSNPYATALFLRYLKEELIDGQKLRSVLEFYPSQNSIIAKTVADFIGIDPKNVFIGNGAIEIIQAVMHNFVGKKIIVNIPTFSSYYEFAKSETNVVYYQLSKEDNYNLNIEHYLNFVKNENPDSVVLINPNNPDGGYINYEKLRYILSELKYVKNIIIDESFIHFAYENKDYNGINIEYLFKEFHNTIIIKSMSKDFGVAGIRIGYAIMSEDKIRGLLKNGYLWNSSGLSEYFLRLYVRKNFFDEYDKVRREYIQETQTFFRKLSGIKQFKVYPSMANFALVELLDGSSSTDFVAKMLIKYGIYMRTCNDKIGLEGEFIRIASRTLEENDMVLKSICDVFKE.

At K243 the chain carries N6-(pyridoxal phosphate)lysine.

This sequence belongs to the class-I pyridoxal-phosphate-dependent aminotransferase family. The cofactor is pyridoxal 5'-phosphate.

The enzyme catalyses O-phospho-L-serine + H(+) = phosphoethanolamine + CO2. The protein operates within capsule biogenesis; capsule polysaccharide biosynthesis. Pyridoxal phosphate (PLP)-dependent decarboxylase involved in the biosynthesis of amidated D-glucuronic acid structures found on the capsular polysaccharide (CPS) of C.jejuni. Catalyzes the decarboxylation of L-serine phosphate to ethanolamine phosphate. Less active with L-threonine phosphate. No activity with L-serine, L-threonine, L-aspartate or L-glutamate. The polypeptide is L-serine phosphate decarboxylase Cj1436c (Campylobacter jejuni subsp. jejuni serotype O:2 (strain ATCC 700819 / NCTC 11168)).